A 91-amino-acid polypeptide reads, in one-letter code: YcgL domain-containing protein ESA_01460 (91 aa).

In terms of domain architecture, YcgL spans 1-85 (MFCVIYRSAR…PPENLLKQHL (85 aa)).

The chain is YcgL domain-containing protein ESA_01460 from Cronobacter sakazakii (strain ATCC BAA-894) (Enterobacter sakazakii).